The chain runs to 257 residues: UPF0246 protein Sbal195_1149 (257 aa).

This sequence belongs to the UPF0246 family.

This chain is UPF0246 protein Sbal195_1149, found in Shewanella baltica (strain OS195).